A 161-amino-acid chain; its full sequence is Transcriptional repressor NrdR (161 aa).

The segment at 3-34 (CPFCGKYDTKVTDSRLVAEGDQVRRRRQCNDC) is a zinc-finger region. The ATP-cone domain occupies 49-139 (PRVIKGDGSR…VYRRFQDLDE (91 aa)).

The protein belongs to the NrdR family. Zn(2+) is required as a cofactor.

In terms of biological role, negatively regulates transcription of bacterial ribonucleotide reductase nrd genes and operons by binding to NrdR-boxes. In Chromohalobacter salexigens (strain ATCC BAA-138 / DSM 3043 / CIP 106854 / NCIMB 13768 / 1H11), this protein is Transcriptional repressor NrdR.